The following is a 450-amino-acid chain: NADP-specific glutamate dehydrogenase (450 aa).

K111 is a catalytic residue.

The protein belongs to the Glu/Leu/Phe/Val dehydrogenases family. Homohexamer.

It carries out the reaction L-glutamate + NADP(+) + H2O = 2-oxoglutarate + NH4(+) + NADPH + H(+). This is NADP-specific glutamate dehydrogenase from Hebeloma cylindrosporum.